A 363-amino-acid chain; its full sequence is Holliday junction branch migration complex subunit RuvB (363 aa).

The segment at 1 to 23 (MHKDEDQRLLGPAPLPNDPDRSL) is disordered. A large ATPase domain (RuvB-L) region spans residues 1–184 (MHKDEDQRLL…FGIPIRLNFY (184 aa)). Residues Leu23, Arg24, Gly65, Lys68, Thr69, Thr70, 131 to 133 (EDY), Arg174, Tyr184, and Arg221 each bind ATP. Residue Thr69 coordinates Mg(2+). The segment at 185–255 (TIEELEYIVQ…IADEALSRLE (71 aa)) is small ATPAse domain (RuvB-S). The head domain (RuvB-H) stretch occupies residues 258–363 (HLGLDPLDRR…QTTLWDGEDD (106 aa)). DNA is bound by residues Arg294, Arg313, and Arg318.

Belongs to the RuvB family. As to quaternary structure, homohexamer. Forms an RuvA(8)-RuvB(12)-Holliday junction (HJ) complex. HJ DNA is sandwiched between 2 RuvA tetramers; dsDNA enters through RuvA and exits via RuvB. An RuvB hexamer assembles on each DNA strand where it exits the tetramer. Each RuvB hexamer is contacted by two RuvA subunits (via domain III) on 2 adjacent RuvB subunits; this complex drives branch migration. In the full resolvosome a probable DNA-RuvA(4)-RuvB(12)-RuvC(2) complex forms which resolves the HJ.

It localises to the cytoplasm. The enzyme catalyses ATP + H2O = ADP + phosphate + H(+). Functionally, the RuvA-RuvB-RuvC complex processes Holliday junction (HJ) DNA during genetic recombination and DNA repair, while the RuvA-RuvB complex plays an important role in the rescue of blocked DNA replication forks via replication fork reversal (RFR). RuvA specifically binds to HJ cruciform DNA, conferring on it an open structure. The RuvB hexamer acts as an ATP-dependent pump, pulling dsDNA into and through the RuvAB complex. RuvB forms 2 homohexamers on either side of HJ DNA bound by 1 or 2 RuvA tetramers; 4 subunits per hexamer contact DNA at a time. Coordinated motions by a converter formed by DNA-disengaged RuvB subunits stimulates ATP hydrolysis and nucleotide exchange. Immobilization of the converter enables RuvB to convert the ATP-contained energy into a lever motion, pulling 2 nucleotides of DNA out of the RuvA tetramer per ATP hydrolyzed, thus driving DNA branch migration. The RuvB motors rotate together with the DNA substrate, which together with the progressing nucleotide cycle form the mechanistic basis for DNA recombination by continuous HJ branch migration. Branch migration allows RuvC to scan DNA until it finds its consensus sequence, where it cleaves and resolves cruciform DNA. The chain is Holliday junction branch migration complex subunit RuvB from Bartonella tribocorum (strain CIP 105476 / IBS 506).